We begin with the raw amino-acid sequence, 185 residues long: Ribonuclease M5 (185 aa).

The 84-residue stretch at 4–87 (KEIIVVEGKD…AFLPKEEALA (84 aa)) folds into the Toprim domain. The Mg(2+) site is built by Glu-10, Asp-56, and Asp-58.

The protein belongs to the ribonuclease M5 family. Requires Mg(2+) as cofactor.

Its subcellular location is the cytoplasm. It catalyses the reaction Endonucleolytic cleavage of RNA, removing 21 and 42 nucleotides, respectively, from the 5'- and 3'-termini of a 5S-rRNA precursor.. In terms of biological role, required for correct processing of both the 5' and 3' ends of 5S rRNA precursor. Cleaves both sides of a double-stranded region yielding mature 5S rRNA in one step. This is Ribonuclease M5 from Bacillus anthracis.